Consider the following 397-residue polypeptide: CCA-adding enzyme (397 aa).

ATP contacts are provided by glycine 26 and arginine 29. CTP is bound by residues glycine 26 and arginine 29. Mg(2+) contacts are provided by aspartate 39 and aspartate 41. 5 residues coordinate ATP: arginine 110, aspartate 153, arginine 156, arginine 159, and arginine 162. Positions 110, 153, 156, 159, and 162 each coordinate CTP.

The protein belongs to the tRNA nucleotidyltransferase/poly(A) polymerase family. Bacterial CCA-adding enzyme type 3 subfamily. As to quaternary structure, homodimer. Mg(2+) is required as a cofactor.

The catalysed reaction is a tRNA precursor + 2 CTP + ATP = a tRNA with a 3' CCA end + 3 diphosphate. It carries out the reaction a tRNA with a 3' CCA end + 2 CTP + ATP = a tRNA with a 3' CCACCA end + 3 diphosphate. Its function is as follows. Catalyzes the addition and repair of the essential 3'-terminal CCA sequence in tRNAs without using a nucleic acid template. Adds these three nucleotides in the order of C, C, and A to the tRNA nucleotide-73, using CTP and ATP as substrates and producing inorganic pyrophosphate. tRNA 3'-terminal CCA addition is required both for tRNA processing and repair. Also involved in tRNA surveillance by mediating tandem CCA addition to generate a CCACCA at the 3' terminus of unstable tRNAs. While stable tRNAs receive only 3'-terminal CCA, unstable tRNAs are marked with CCACCA and rapidly degraded. The protein is CCA-adding enzyme of Bacillus thuringiensis subsp. konkukian (strain 97-27).